Reading from the N-terminus, the 146-residue chain is Hemoglobin subunit beta (146 aa).

Positions 2-146 (HWTAEEKQLI…VAHALARKYH (145 aa)) constitute a Globin domain. Heme b is bound by residues H63 and H92.

Belongs to the globin family. Heterotetramer of two alpha chains and two beta chains. In terms of tissue distribution, red blood cells.

Involved in oxygen transport from the lung to the various peripheral tissues. The protein is Hemoglobin subunit beta (HBB) of Ciconia ciconia (White stork).